The following is a 513-amino-acid chain: Na(+)/H(+) antiporter NhaB (513 aa).

12 consecutive transmembrane segments (helical) span residues 23 to 43 (LALI…PFVA), 52 to 72 (IFTL…LLAI), 97 to 117 (LLLM…LFIF), 120 to 140 (LLLS…AAAF), 144 to 164 (FLDA…FYGI), 202 to 222 (LMMH…VGEP), 238 to 258 (FFLR…LTCL), 303 to 323 (AIIG…VGLI), 348 to 368 (TESL…AVII), 391 to 411 (LFYI…VGTI), 447 to 467 (ATPN…APLI), and 475 to 495 (VWMA…CVEF).

This sequence belongs to the NhaB Na(+)/H(+) (TC 2.A.34) antiporter family.

Its subcellular location is the cell inner membrane. It carries out the reaction 2 Na(+)(in) + 3 H(+)(out) = 2 Na(+)(out) + 3 H(+)(in). In terms of biological role, na(+)/H(+) antiporter that extrudes sodium in exchange for external protons. This Shigella boydii serotype 18 (strain CDC 3083-94 / BS512) protein is Na(+)/H(+) antiporter NhaB.